Consider the following 74-residue polypeptide: Arabinogalactan protein 20 (74 aa).

A signal peptide spans 1–26; sequence MASRNSVAVIALFAFVFAVISPFAGA. A Pyrrolidone carboxylic acid modification is found at Q27. 4-hydroxyproline occurs at positions 31, 33, and 35. O-linked (Ara...) hydroxyproline glycans are attached at residues P31, P33, and P35. S37 is lipidated: GPI-anchor amidated serine. Residues 38 to 74 constitute a propeptide, removed in mature form; it reads DGTSIDQGIAYLLMVVALVLTYLIHPLDASSSSYTFF.

This sequence belongs to the AG-peptide AGP family. Contains 4-hydroxyproline; hydroxylated on Pro-31, Pro-33 and Pro-35. In terms of processing, O-glycosylated on hydroxyprolines; noncontiguous hydroxylproline residues are glycosylated with arabinogalactan.

The protein resides in the cell membrane. Functionally, proteoglycan that seems to be implicated in diverse developmental roles such as differentiation, cell-cell recognition, embryogenesis and programmed cell death. This Arabidopsis thaliana (Mouse-ear cress) protein is Arabinogalactan protein 20.